The sequence spans 409 residues: UV excision repair protein RAD23 homolog B (409 aa).

Residues 1–79 (MQVTLKTLQQ…VVVMVTKPKA (79 aa)) enclose the Ubiquitin-like domain. Positions 80 to 175 (VSTPAPATTQ…STSGDSSRSN (96 aa)) are disordered. Positions 81–143 (STPAPATTQQ…SSEPAPASAA (63 aa)) are enriched in low complexity. Over residues 144–153 (KQEKPAEKPA) the composition is skewed to basic and acidic residues. T155 carries the phosphothreonine modification. The residue at position 160 (S160) is a Phosphoserine. Positions 160–175 (SPTATDSTSGDSSRSN) are enriched in polar residues. T164 carries the phosphothreonine modification. The residue at position 174 (S174) is a Phosphoserine. T186 is subject to Phosphothreonine. The 41-residue stretch at 188–228 (QSYENMVTEIMSMGYEREQVIAALRASFNNPDRAVEYLLMG) folds into the UBA 1 domain. S199 is subject to Phosphoserine. Phosphotyrosine is present on Y202. Residues 236-276 (QAVVDPPQAASTGAPQSSAVAAAAATTTATTTTTSSGGHPL) form a disordered region. The segment covering 252–271 (SSAVAAAAATTTATTTTTSS) has biased composition (low complexity). The 44-residue stretch at 274–317 (HPLEFLRNQPQFQQMRQIIQQNPSLLPALLQQIGRENPQLLQQI) folds into the STI1 domain. The UBA 2 domain maps to 364 to 404 (PQEKEAIERLKALGFPEGLVIQAYFACEKNENLAANFLLQQ).

Belongs to the RAD23 family. Component of the XPC complex composed of XPC, RAD23B and CETN2. Interacts with NGLY1 and PSMC1. Interacts with ATXN3. Interacts with PSMD4 and PSMC5. Interacts with AMFR. Interacts with VCP; the interaction is indirect and mediated by NGLY1.

It localises to the nucleus. The protein resides in the cytoplasm. In terms of biological role, multiubiquitin chain receptor involved in modulation of proteasomal degradation. Binds to polyubiquitin chains. Proposed to be capable to bind simultaneously to the 26S proteasome and to polyubiquitinated substrates and to deliver ubiquitinated proteins to the proteasome. May play a role in endoplasmic reticulum-associated degradation (ERAD) of misfolded glycoproteins by association with PNGase and delivering deglycosylated proteins to the proteasome. Functionally, involved in global genome nucleotide excision repair (GG-NER) by acting as component of the XPC complex. Cooperatively with CETN2 appears to stabilize XPC. May protect XPC from proteasomal degradation. The XPC complex is proposed to represent the first factor bound at the sites of DNA damage and together with other core recognition factors, XPA, RPA and the TFIIH complex, is part of the pre-incision (or initial recognition) complex. The XPC complex recognizes a wide spectrum of damaged DNA characterized by distortions of the DNA helix such as single-stranded loops, mismatched bubbles or single-stranded overhangs. The orientation of XPC complex binding appears to be crucial for inducing a productive NER. XPC complex is proposed to recognize and to interact with unpaired bases on the undamaged DNA strand which is followed by recruitment of the TFIIH complex and subsequent scanning for lesions in the opposite strand in a 5'-to-3' direction by the NER machinery. Cyclobutane pyrimidine dimers (CPDs) which are formed upon UV-induced DNA damage esacpe detection by the XPC complex due to a low degree of structural perurbation. Instead they are detected by the UV-DDB complex which in turn recruits and cooperates with the XPC complex in the respective DNA repair. In vitro, the XPC:RAD23B dimer is sufficient to initiate NER; it preferentially binds to cisplatin and UV-damaged double-stranded DNA and also binds to a variety of chemically and structurally diverse DNA adducts. XPC:RAD23B contacts DNA both 5' and 3' of a cisplatin lesion with a preference for the 5' side. XPC:RAD23B induces a bend in DNA upon binding. XPC:RAD23B stimulates the activity of DNA glycosylases TDG and SMUG1. This is UV excision repair protein RAD23 homolog B (RAD23B) from Homo sapiens (Human).